We begin with the raw amino-acid sequence, 506 residues long: Anaerobic nitric oxide reductase transcription regulator NorR (506 aa).

4-aspartylphosphate is present on D57. Residues 187 to 416 (MIGLSPAMTQ…LEHAIHRAVV (230 aa)) enclose the Sigma-54 factor interaction domain. Residues 215-222 (GETGTGKE) and 278-287 (ADNGTLFLDE) contribute to the ATP site. The segment at residues 481–500 (WAASARALETDVANLHRLAK) is a DNA-binding region (H-T-H motif).

Its pathway is nitrogen metabolism; nitric oxide reduction. Functionally, required for the expression of anaerobic nitric oxide (NO) reductase, acts as a transcriptional activator for at least the norVW operon. Activation also requires sigma-54. This Salmonella newport (strain SL254) protein is Anaerobic nitric oxide reductase transcription regulator NorR.